Here is a 592-residue protein sequence, read N- to C-terminus: Aspartate--tRNA ligase (592 aa).

Glutamate 171 serves as a coordination point for L-aspartate. Positions 195–198 (QLFK) are aspartate. Arginine 217 lines the L-aspartate pocket. ATP is bound by residues 217-219 (RDE) and glutamine 226. Histidine 448 serves as a coordination point for L-aspartate. An ATP-binding site is contributed by glutamate 482. Residue arginine 489 participates in L-aspartate binding. 534-537 (GLDR) is a binding site for ATP.

This sequence belongs to the class-II aminoacyl-tRNA synthetase family. Type 1 subfamily. In terms of assembly, homodimer.

It localises to the cytoplasm. The enzyme catalyses tRNA(Asp) + L-aspartate + ATP = L-aspartyl-tRNA(Asp) + AMP + diphosphate. Catalyzes the attachment of L-aspartate to tRNA(Asp) in a two-step reaction: L-aspartate is first activated by ATP to form Asp-AMP and then transferred to the acceptor end of tRNA(Asp). This chain is Aspartate--tRNA ligase, found in Vibrio vulnificus (strain YJ016).